The following is a 510-amino-acid chain: NAD(P)H-quinone oxidoreductase subunit 2 A, chloroplastic (510 aa).

A run of 14 helical transmembrane segments spans residues 31 to 51 (FIFP…IDLT), 59 to 79 (WFYF…LFRW), 99 to 119 (IFQF…VEYI), 124 to 144 (MAIT…MFLC), 149 to 169 (LITI…LSGY), 184 to 204 (LLMG…LYGL), 229 to 249 (ISIA…LAPF), 261 to 281 (PTPV…ALAT), 295 to 315 (WHLL…LLAI), 323 to 343 (MLAY…IVGD), 354 to 374 (YMLF…LFGL), 395 to 415 (ALSL…AGFF), 418 to 438 (LYLF…IGLL), and 484 to 504 (MTVC…ILAI).

The protein belongs to the complex I subunit 2 family. In terms of assembly, NDH is composed of at least 16 different subunits, 5 of which are encoded in the nucleus.

The protein resides in the plastid. Its subcellular location is the chloroplast thylakoid membrane. The catalysed reaction is a plastoquinone + NADH + (n+1) H(+)(in) = a plastoquinol + NAD(+) + n H(+)(out). The enzyme catalyses a plastoquinone + NADPH + (n+1) H(+)(in) = a plastoquinol + NADP(+) + n H(+)(out). Functionally, NDH shuttles electrons from NAD(P)H:plastoquinone, via FMN and iron-sulfur (Fe-S) centers, to quinones in the photosynthetic chain and possibly in a chloroplast respiratory chain. The immediate electron acceptor for the enzyme in this species is believed to be plastoquinone. Couples the redox reaction to proton translocation, and thus conserves the redox energy in a proton gradient. The polypeptide is NAD(P)H-quinone oxidoreductase subunit 2 A, chloroplastic (Oryza sativa subsp. japonica (Rice)).